A 136-amino-acid chain; its full sequence is MENTQDFSPPHMDASRPSLGFPLGTALLLIIIFSLSGIFSCCYHWDKHRSLRRSLANGRPSADIESNPYKPKPPFPEMKKPQNLSVPVLMPGDNTPKFIALPCPCAPPRPEKLTVDVQTPPQSPPVKPARFPVPLY.

Residues 19 to 39 form a helical membrane-spanning segment; sequence LGFPLGTALLLIIIFSLSGIF. Disordered stretches follow at residues 54–87 and 112–136; these read SLANGRPSADIESNPYKPKPPFPEMKKPQNLSVP and KLTVDVQTPPQSPPVKPARFPVPLY.

It localises to the membrane. This is an uncharacterized protein from Arabidopsis thaliana (Mouse-ear cress).